Reading from the N-terminus, the 252-residue chain is Ribosomal RNA small subunit methyltransferase J (252 aa).

S-adenosyl-L-methionine contacts are provided by residues 101–102 (RD), 117–118 (ER), 153–154 (SS), and D171.

The protein belongs to the methyltransferase superfamily. RsmJ family.

The protein localises to the cytoplasm. It catalyses the reaction guanosine(1516) in 16S rRNA + S-adenosyl-L-methionine = N(2)-methylguanosine(1516) in 16S rRNA + S-adenosyl-L-homocysteine + H(+). Its function is as follows. Specifically methylates the guanosine in position 1516 of 16S rRNA. This is Ribosomal RNA small subunit methyltransferase J from Salmonella dublin (strain CT_02021853).